A 226-amino-acid polypeptide reads, in one-letter code: X-linked lymphocyte-regulated protein 3A (226 aa).

The span at 1 to 18 (MSSRERKATDTAGRHSRM) shows a compositional bias: basic and acidic residues. A disordered region spans residues 1–72 (MSSRERKATD…QDLVQEFEEP (72 aa)). Polar residues predominate over residues 21–30 (NLSSDDSQNP). Basic and acidic residues-rich tracts occupy residues 39 to 48 (EVLDAGREDI) and 56 to 65 (QQARKEKQDL). A coiled-coil region spans residues 155 to 210 (ETLTLQKNRMEEFKSLCEKYLEKLEVLRDSRGNSIAEELRRLIATLEIKLLMLHNQ).

It belongs to the XLR/SYCP3 family. Expressed in lymphoid cells.

This is X-linked lymphocyte-regulated protein 3A (Xlr3a) from Mus musculus (Mouse).